Consider the following 91-residue polypeptide: Uteroglobin (91 aa).

Residues 1–21 (MKLTITLALVTLALLCSPASA) form the signal peptide.

Belongs to the secretoglobin family. Antiparallel homodimer; disulfide-linked. Interaction with LMBR1L is controversial.

It is found in the secreted. Uteroglobin binds progesterone specifically and with high affinity. It may regulate progesterone concentrations reaching the blastocyst. It is also a potent inhibitor of phospholipase A2. The polypeptide is Uteroglobin (SCGB1A1) (Lepus capensis (Brown hare)).